Consider the following 408-residue polypeptide: Snake venom metalloproteinase BaP1 (408 aa).

Residues 1 to 20 form the signal peptide; that stretch reads MIEVLLVTICLAVFPYQGSS. The propeptide occupies 21 to 191; that stretch reads IILESGNVND…KASQSNLTPE (171 aa). Q192 bears the Pyrrolidone carboxylic acid mark. The region spanning 198-394 is the Peptidase M12B domain; that stretch reads RYIELAVVAD…HNPQCILNKP (197 aa). Cystine bridges form between C309–C389, C349–C373, and C351–C356. H334 is a binding site for Zn(2+). E335 is a catalytic residue. H338 and H344 together coordinate Zn(2+). Residues 395-408 constitute a propeptide that is removed on maturation; that stretch reads LLTVSGNELLEAGE.

It belongs to the venom metalloproteinase (M12B) family. P-I subfamily. In terms of assembly, monomer. Zn(2+) serves as cofactor. In terms of tissue distribution, expressed by the venom gland.

It localises to the secreted. Inhibited by EDTA, partially inhibited by o-phenantropine, and not inhibited by PMSF, pepstatin A, and aprotinin. Zinc metalloprotease that exhibits a weak hemorrhagic activity (with a minimum hemorrhagic dose of 20 ug by intradermal and intramuscular injection into mice). The basal membrane components collagen (all chains of type IV) (COL4A4), laminin and nidogen are all degraded by this toxin. Rapidly degrades the Aalpha-chain (FGA) of fibrinogen, and later on, degrades the Bbeta-chain (FGB) of fibrinogen. Also activates the complement system, and induces rat neutrophil chemotaxis. Induces edema in mouse food pad and shows a mild myotoxicity. The chain is Snake venom metalloproteinase BaP1 from Bothrops asper (Terciopelo).